The following is a 233-amino-acid chain: DnaA regulatory inactivator Hda (233 aa).

It belongs to the DnaA family. HdA subfamily. The active form seems to be an ADP-bound monomer. Forms the RIDA complex (regulatory inactivation of DnaA) of ATP-DnaA, ADP-Hda and the DNA-loaded beta sliding clamp (dnaN).

In terms of biological role, mediates the interaction of DNA replication initiator protein DnaA with DNA polymerase subunit beta sliding clamp (dnaN). Stimulates hydrolysis of ATP-DnaA to ADP-DnaA, rendering DnaA inactive for reinitiation, a process called regulatory inhibition of DnaA or RIDA. The chain is DnaA regulatory inactivator Hda from Photorhabdus laumondii subsp. laumondii (strain DSM 15139 / CIP 105565 / TT01) (Photorhabdus luminescens subsp. laumondii).